The following is a 957-amino-acid chain: Vacuolar membrane protease (957 aa).

Over 1–10 the chain is Cytoplasmic; sequence MARYNPFSFT. A helical membrane pass occupies residues 11-31; sequence PGPVVFFTTVIYVGLFAALLV. At 32-369 the chain is on the vacuolar side; sequence THLTVPDYPS…RVFVVFQLHT (338 aa). Asn-48, Asn-105, and Asn-136 each carry an N-linked (GlcNAc...) asparagine glycan. Zn(2+) contacts are provided by His-152 and Asp-164. The Proton acceptor role is filled by Glu-198. Zn(2+) is bound by residues Glu-199, Glu-224, and His-297. A helical transmembrane segment spans residues 370 to 390; it reads LFALCVTLLVVAPITLIGLTF. Topologically, residues 391 to 423 are cytoplasmic; the sequence is GLSKADKNYLLARKAFVYSSDDDNPVQLYGWRG. Residues 424 to 444 form a helical membrane-spanning segment; the sequence is FFRFPIIFISATAVVVALAYL. The Vacuolar segment spans residues 445–450; that stretch reads LVRFNA. A helical transmembrane segment spans residues 451-471; it reads FIIYSSPFAVWSMMLSAWFFV. The Cytoplasmic segment spans residues 472 to 490; that stretch reads AWFFSRGADAMRPSALQRM. A helical transmembrane segment spans residues 491–511; sequence YALIWLFIGSFVLLTIVTVFV. Residues 512-521 are Vacuolar-facing; the sequence is NNYQVVAGYP. Residues 522–542 form a helical membrane-spanning segment; sequence ALFYFAVVFVAIMLSYLELFF. The Cytoplasmic segment spans residues 543 to 642; it reads APTKSAYARH…YPGEQEWSGK (100 aa). 2 disordered regions span residues 559–586 and 603–627; these read SRRN…PVAD and FTRY…SQRL. A compositionally biased stretch (basic and acidic residues) spans 603–613; that stretch reads FTRYGSRRDSA. The chain crosses the membrane as a helical span at residues 643-663; it reads LPSWIWIIQLLLLAPLVIVLV. The Vacuolar portion of the chain corresponds to 664-685; the sequence is GQVALLLTSALYQTPSDGNSPL. The helical transmembrane segment at 686-706 threads the bilayer; the sequence is FIYLAIAALSVLLLAPTGPFI. Over 707 to 713 the chain is Cytoplasmic; that stretch reads HRFTYHV. Residues 714–734 form a helical membrane-spanning segment; that stretch reads PTFLFLVCLGTVIYNLVAFPF. Residues 735 to 957 are Vacuolar-facing; it reads SRDHRLKVYF…LVEGFKRFEI (223 aa). Asn-782, Asn-818, and Asn-834 each carry an N-linked (GlcNAc...) asparagine glycan.

It belongs to the peptidase M28 family. Requires Zn(2+) as cofactor.

The protein resides in the vacuole membrane. In terms of biological role, may be involved in vacuolar sorting and osmoregulation. The protein is Vacuolar membrane protease of Pyrenophora teres f. teres (strain 0-1) (Barley net blotch fungus).